A 126-amino-acid chain; its full sequence is Large ribosomal subunit protein uL14m (126 aa).

It belongs to the universal ribosomal protein uL14 family. In terms of assembly, component of the mitochondrial large ribosomal subunit (mt-LSU). Mature yeast 74S mitochondrial ribosomes consist of a small (37S) and a large (54S) subunit. The 37S small subunit contains a 15S ribosomal RNA (15S mt-rRNA) and at least 32 different proteins. The 54S large subunit contains a 21S rRNA (21S mt-rRNA) and at least 45 different proteins.

The protein resides in the mitochondrion. Functionally, component of the mitochondrial ribosome (mitoribosome), a dedicated translation machinery responsible for the synthesis of mitochondrial genome-encoded proteins, including at least some of the essential transmembrane subunits of the mitochondrial respiratory chain. The mitoribosomes are attached to the mitochondrial inner membrane and translation products are cotranslationally integrated into the membrane. This is Large ribosomal subunit protein uL14m (mrpl38) from Schizosaccharomyces pombe (strain 972 / ATCC 24843) (Fission yeast).